The sequence spans 63 residues: Large ribosomal subunit protein uL30 (63 aa).

Belongs to the universal ribosomal protein uL30 family. Part of the 50S ribosomal subunit.

This Rickettsia felis (strain ATCC VR-1525 / URRWXCal2) (Rickettsia azadi) protein is Large ribosomal subunit protein uL30.